Here is a 437-residue protein sequence, read N- to C-terminus: MANVVVIGAQWGDEGKGKITDLLSRSADVVVRYQGGVNAGHTIVVKDKVLKLHLIPSGILYPDTICLIGSGTVIDPKIMLSELDMLVENQIDISRLQLASTAHVTMPYHRLLDQAMEQRRGNNRIGTTGRGIGPTYSDKSERIGIRVIDILNEDKLRTRLADPLRQKNNILEKIYAISPLDFEEIIKEYIEYGNRLAPHVVDCTRVIHQAARARKNILFEGAQGTLLDLDHGTYPYVTSSHPVSGGACIGAGVGPTLIDRVIGVAKAYTTRVGEGPFPTELEGSLNDHLCSRGKEFGTTTGRRRRCGWFDGVIGRYAVDVNGLDCLAITKLDVLDELEEIKVCVAYELNNERIDYFTSNVEDFSKCKPIFETLPGWQSSTSDCRSLEELPEKAMMYLKFLAELMEVPIAIVSIGPNRDQTIIVEDPIHGPKRALLAA.

Residues 12-18 (GDEGKGK) and 40-42 (GHT) contribute to the GTP site. The active-site Proton acceptor is the D13. D13 and G40 together coordinate Mg(2+). Residues 13-16 (DEGK), 38-41 (NAGH), T128, R142, Q223, T238, and R302 contribute to the IMP site. The Proton donor role is filled by H41. Substrate is bound at residue 298-304 (TTTGRRR). Residues R304 and 330–332 (KLD) contribute to the GTP site.

Belongs to the adenylosuccinate synthetase family. In terms of assembly, homodimer. The cofactor is Mg(2+).

It is found in the plastid. It localises to the organellar chromatophore. It carries out the reaction IMP + L-aspartate + GTP = N(6)-(1,2-dicarboxyethyl)-AMP + GDP + phosphate + 2 H(+). It participates in purine metabolism; AMP biosynthesis via de novo pathway; AMP from IMP: step 1/2. Its function is as follows. Plays an important role in the de novo pathway and in the salvage pathway of purine nucleotide biosynthesis. Catalyzes the first committed step in the biosynthesis of AMP from IMP. The protein is Adenylosuccinate synthetase, organellar chromatophore of Paulinella chromatophora.